The following is a 236-amino-acid chain: Putative lipoprotein MlpA (236 aa).

The first 21 residues, 1–21 (MTKNIVNTALVLVGAGSLLTG), serve as a signal peptide directing secretion. A lipid anchor (N-palmitoyl cysteine) is attached at C22. C22 is lipidated: S-diacylglycerol cysteine.

Its subcellular location is the cell membrane. This Myxococcus xanthus protein is Putative lipoprotein MlpA (mlpA).